A 182-amino-acid polypeptide reads, in one-letter code: Inner membrane-spanning protein YciB (182 aa).

5 helical membrane-spanning segments follow: residues 22 to 42 (IYIA…VTYA), 50 to 70 (MHLI…IFHD), 72 to 92 (AFIK…LAVS), 118 to 138 (VTWY…YVAF), and 148 to 168 (FKVF…VVYL).

Belongs to the YciB family.

It localises to the cell inner membrane. Plays a role in cell envelope biogenesis, maintenance of cell envelope integrity and membrane homeostasis. In Shewanella woodyi (strain ATCC 51908 / MS32), this protein is Inner membrane-spanning protein YciB.